Reading from the N-terminus, the 292-residue chain is Elongation factor Ts (292 aa).

Residues 82–85 (TDFV) are involved in Mg(2+) ion dislocation from EF-Tu.

Belongs to the EF-Ts family.

Its subcellular location is the cytoplasm. Associates with the EF-Tu.GDP complex and induces the exchange of GDP to GTP. It remains bound to the aminoacyl-tRNA.EF-Tu.GTP complex up to the GTP hydrolysis stage on the ribosome. The polypeptide is Elongation factor Ts (Legionella pneumophila (strain Lens)).